The sequence spans 205 residues: uncharacterized protein (205 aa).

Positions 51-189 (ANVDAVAILA…KKGFAIDVRL (139 aa)) constitute a Nudix hydrolase domain. A Nudix box motif is present at residues 90 to 111 (GLVDSKESCEDAAIRELREETG).

It belongs to the Nudix hydrolase family.

It is found in the cytoplasm. The protein localises to the nucleus. This is an uncharacterized protein from Schizosaccharomyces pombe (strain 972 / ATCC 24843) (Fission yeast).